A 258-amino-acid chain; its full sequence is Ribonuclease PH (258 aa).

Phosphate contacts are provided by residues Arg88 and 126-128 (GTR).

This sequence belongs to the RNase PH family. As to quaternary structure, homohexameric ring arranged as a trimer of dimers.

It carries out the reaction tRNA(n+1) + phosphate = tRNA(n) + a ribonucleoside 5'-diphosphate. Functionally, phosphorolytic 3'-5' exoribonuclease that plays an important role in tRNA 3'-end maturation. Removes nucleotide residues following the 3'-CCA terminus of tRNAs; can also add nucleotides to the ends of RNA molecules by using nucleoside diphosphates as substrates, but this may not be physiologically important. Probably plays a role in initiation of 16S rRNA degradation (leading to ribosome degradation) during starvation. The polypeptide is Ribonuclease PH (Mycobacteroides abscessus (strain ATCC 19977 / DSM 44196 / CCUG 20993 / CIP 104536 / JCM 13569 / NCTC 13031 / TMC 1543 / L948) (Mycobacterium abscessus)).